The chain runs to 555 residues: Probable terpene synthase 6 (555 aa).

The Mg(2+) site is built by Asp-309, Asp-313, and Glu-460. The short motif at Asp-309–Asp-313 is the DDXXD motif element.

This sequence belongs to the terpene synthase family. It depends on Mg(2+) as a cofactor.

In terms of biological role, probable sesquiterpene synthase. The chain is Probable terpene synthase 6 (TPS6) from Ricinus communis (Castor bean).